The primary structure comprises 158 residues: 6,7-dimethyl-8-ribityllumazine synthase (158 aa).

Residues F22, 57 to 59 (AYE), and 84 to 86 (TVI) contribute to the 5-amino-6-(D-ribitylamino)uracil site. 89 to 90 (GT) lines the (2S)-2-hydroxy-3-oxobutyl phosphate pocket. The active-site Proton donor is the H92. 5-amino-6-(D-ribitylamino)uracil is bound at residue F117. R131 contributes to the (2S)-2-hydroxy-3-oxobutyl phosphate binding site.

The protein belongs to the DMRL synthase family. As to quaternary structure, forms an icosahedral capsid composed of 60 subunits, arranged as a dodecamer of pentamers.

The catalysed reaction is (2S)-2-hydroxy-3-oxobutyl phosphate + 5-amino-6-(D-ribitylamino)uracil = 6,7-dimethyl-8-(1-D-ribityl)lumazine + phosphate + 2 H2O + H(+). It participates in cofactor biosynthesis; riboflavin biosynthesis; riboflavin from 2-hydroxy-3-oxobutyl phosphate and 5-amino-6-(D-ribitylamino)uracil: step 1/2. Functionally, catalyzes the formation of 6,7-dimethyl-8-ribityllumazine by condensation of 5-amino-6-(D-ribitylamino)uracil with 3,4-dihydroxy-2-butanone 4-phosphate. This is the penultimate step in the biosynthesis of riboflavin. The protein is 6,7-dimethyl-8-ribityllumazine synthase of Pectobacterium atrosepticum (strain SCRI 1043 / ATCC BAA-672) (Erwinia carotovora subsp. atroseptica).